We begin with the raw amino-acid sequence, 104 residues long: Pyrimidine/purine nucleoside phosphorylase (104 aa).

Belongs to the nucleoside phosphorylase PpnP family.

The catalysed reaction is a purine D-ribonucleoside + phosphate = a purine nucleobase + alpha-D-ribose 1-phosphate. It catalyses the reaction adenosine + phosphate = alpha-D-ribose 1-phosphate + adenine. It carries out the reaction cytidine + phosphate = cytosine + alpha-D-ribose 1-phosphate. The enzyme catalyses guanosine + phosphate = alpha-D-ribose 1-phosphate + guanine. The catalysed reaction is inosine + phosphate = alpha-D-ribose 1-phosphate + hypoxanthine. It catalyses the reaction thymidine + phosphate = 2-deoxy-alpha-D-ribose 1-phosphate + thymine. It carries out the reaction uridine + phosphate = alpha-D-ribose 1-phosphate + uracil. The enzyme catalyses xanthosine + phosphate = alpha-D-ribose 1-phosphate + xanthine. Functionally, catalyzes the phosphorolysis of diverse nucleosides, yielding D-ribose 1-phosphate and the respective free bases. Can use uridine, adenosine, guanosine, cytidine, thymidine, inosine and xanthosine as substrates. Also catalyzes the reverse reactions. In Geobacter sulfurreducens (strain ATCC 51573 / DSM 12127 / PCA), this protein is Pyrimidine/purine nucleoside phosphorylase.